The sequence spans 773 residues: Protein FAM149A (773 aa).

2 stretches are compositionally biased toward low complexity: residues T18–A37 and L54–A90. Disordered stretches follow at residues T18–G155, D173–P210, F232–G264, and T568–L613. Positions I174–D186 are enriched in acidic residues. Positions T245–G264 are enriched in low complexity.

The protein belongs to the FAM149 family.

In Homo sapiens (Human), this protein is Protein FAM149A (FAM149A).